A 180-amino-acid polypeptide reads, in one-letter code: Inner membrane-spanning protein YciB (180 aa).

A run of 5 helical transmembrane segments spans residues 11–31 (ILFF…ALII), 52–72 (IIMG…NKVE), 76–96 (WKVT…QYGF), 121–141 (LAWA…SQYC), and 149–169 (FKSF…GIYV).

It belongs to the YciB family.

Its subcellular location is the cell inner membrane. Plays a role in cell envelope biogenesis, maintenance of cell envelope integrity and membrane homeostasis. This is Inner membrane-spanning protein YciB from Mannheimia succiniciproducens (strain KCTC 0769BP / MBEL55E).